The following is a 341-amino-acid chain: Anthranilate phosphoribosyltransferase (341 aa).

5-phospho-alpha-D-ribose 1-diphosphate contacts are provided by residues glycine 80, 83 to 84 (GD), threonine 88, 90 to 93 (NIST), 108 to 116 (KHGNRAVSS), and serine 120. Glycine 80 is a binding site for anthranilate. Serine 92 provides a ligand contact to Mg(2+). Residue asparagine 111 participates in anthranilate binding. Anthranilate is bound at residue arginine 166. Mg(2+) is bound by residues aspartate 225 and glutamate 226.

This sequence belongs to the anthranilate phosphoribosyltransferase family. In terms of assembly, homodimer. It depends on Mg(2+) as a cofactor.

It catalyses the reaction N-(5-phospho-beta-D-ribosyl)anthranilate + diphosphate = 5-phospho-alpha-D-ribose 1-diphosphate + anthranilate. It functions in the pathway amino-acid biosynthesis; L-tryptophan biosynthesis; L-tryptophan from chorismate: step 2/5. In terms of biological role, catalyzes the transfer of the phosphoribosyl group of 5-phosphorylribose-1-pyrophosphate (PRPP) to anthranilate to yield N-(5'-phosphoribosyl)-anthranilate (PRA). The chain is Anthranilate phosphoribosyltransferase from Priestia megaterium (strain ATCC 12872 / QMB1551) (Bacillus megaterium).